The chain runs to 880 residues: Alanine--tRNA ligase (880 aa).

Zn(2+)-binding residues include histidine 567, histidine 571, cysteine 669, and histidine 673.

This sequence belongs to the class-II aminoacyl-tRNA synthetase family. Requires Zn(2+) as cofactor.

It is found in the cytoplasm. The enzyme catalyses tRNA(Ala) + L-alanine + ATP = L-alanyl-tRNA(Ala) + AMP + diphosphate. In terms of biological role, catalyzes the attachment of alanine to tRNA(Ala) in a two-step reaction: alanine is first activated by ATP to form Ala-AMP and then transferred to the acceptor end of tRNA(Ala). Also edits incorrectly charged Ser-tRNA(Ala) and Gly-tRNA(Ala) via its editing domain. In Syntrophomonas wolfei subsp. wolfei (strain DSM 2245B / Goettingen), this protein is Alanine--tRNA ligase.